The sequence spans 561 residues: Transmembrane protein 151B (561 aa).

Over residues 1–10 (MSPPGSAAGE) the composition is skewed to low complexity. The disordered stretch occupies residues 1-42 (MSPPGSAAGESAGGGGGGGGSGVPEEPMASADEGPAREEQRP). Over residues 11–22 (SAGGGGGGGGSG) the composition is skewed to gly residues. 2 consecutive transmembrane segments (helical) span residues 59–79 (CLLL…CHVT) and 106–126 (YVYI…VECW). Positions 489–507 (VNEASCPTEQTRLSSQASM) are enriched in polar residues. Positions 489-523 (VNEASCPTEQTRLSSQASMRDNEEDEDEEEAGPPP) are disordered. Positions 510–519 (NEEDEDEEEA) are enriched in acidic residues.

Belongs to the TMEM151 family.

It is found in the membrane. This Mus musculus (Mouse) protein is Transmembrane protein 151B (Tmem151b).